A 278-amino-acid polypeptide reads, in one-letter code: uncharacterized protein (278 aa).

An N-terminal signal peptide occupies residues 1 to 20; it reads MSPLIVGTLIIILLSGLATA. Gly-96 is lipidated: GPI-anchor amidated glycine. Positions 97-278 are cleaved as a propeptide — removed in mature form; it reads TFLTSPTAKR…QLIMQTFNGS (182 aa).

Its subcellular location is the cell membrane. This is an uncharacterized protein from Schizosaccharomyces pombe (strain 972 / ATCC 24843) (Fission yeast).